The sequence spans 317 residues: Protein CbxX, plasmid (317 aa).

85-92 (GNPGTGKT) is a binding site for ATP.

Belongs to the CbxX/CfxQ family.

Seems to be necessary for the expression of RuBisCO. The sequence is that of Protein CbxX, plasmid (cbxXP) from Cupriavidus necator (strain ATCC 17699 / DSM 428 / KCTC 22496 / NCIMB 10442 / H16 / Stanier 337) (Ralstonia eutropha).